A 251-amino-acid chain; its full sequence is Triosephosphate isomerase (251 aa).

8–10 (NWK) provides a ligand contact to substrate. Histidine 97 serves as the catalytic Electrophile. Glutamate 170 (proton acceptor) is an active-site residue. Residues glycine 176, serine 215, and 236–237 (GG) each bind substrate.

Belongs to the triosephosphate isomerase family. In terms of assembly, homodimer.

It is found in the cytoplasm. The catalysed reaction is D-glyceraldehyde 3-phosphate = dihydroxyacetone phosphate. The protein operates within carbohydrate biosynthesis; gluconeogenesis. It participates in carbohydrate degradation; glycolysis; D-glyceraldehyde 3-phosphate from glycerone phosphate: step 1/1. Its function is as follows. Involved in the gluconeogenesis. Catalyzes stereospecifically the conversion of dihydroxyacetone phosphate (DHAP) to D-glyceraldehyde-3-phosphate (G3P). This chain is Triosephosphate isomerase, found in Nitratidesulfovibrio vulgaris (strain DSM 19637 / Miyazaki F) (Desulfovibrio vulgaris).